The chain runs to 130 residues: T-cell receptor alpha chain V region PHDS58 (130 aa).

Positions M1–A20 are cleaved as a signal peptide. Residues Q21–G114 form a v segment region. N-linked (GlcNAc...) asparagine glycosylation occurs at N90. A j segment region spans residues F115 to L130.

The chain is T-cell receptor alpha chain V region PHDS58 from Mus musculus (Mouse).